A 407-amino-acid polypeptide reads, in one-letter code: Ornithine cyclodeaminase (407 aa).

The NAD(+) site is built by Asn233, Ala234, Asp312, Thr344, Met345, Leu346, His347, Asp365, Asp388, and Val389.

Belongs to the AgrE/ArgZ ornithine cyclodeaminase family. NAD(+) is required as a cofactor.

It catalyses the reaction L-ornithine = L-proline + NH4(+). Catalyzes the conversion of ornithine to proline, with the release of ammonia. This is Ornithine cyclodeaminase from Archaeoglobus fulgidus (strain ATCC 49558 / DSM 4304 / JCM 9628 / NBRC 100126 / VC-16).